The following is a 789-amino-acid chain: SWI5-dependent HO expression protein 4 (789 aa).

Ser-18 bears the Phosphoserine mark.

It is found in the cytoplasm. Required for mother cell-specific ho expression. Might be required for the transport of factors (such as ASH1) that promote HO repression from the mother cell into its bud. The sequence is that of SWI5-dependent HO expression protein 4 (SHE4) from Saccharomyces cerevisiae (strain ATCC 204508 / S288c) (Baker's yeast).